A 264-amino-acid chain; its full sequence is ATP synthase subunit a (264 aa).

The next 7 membrane-spanning stretches (helical) occupy residues 41–61 (ITNIGFYLTMGAFFLLIINLL), 99–119 (IYFPFIYALFIFILINNLIGM), 129–149 (HFVLTFALSFTIVLGATILGF), 156–176 (FFSLLVPAGCPLGLLPLLVLI), 194–214 (ANILSGHMLLHILAGFTYNIM), 217–237 (GIIFFFLGLIPLAFIIAFSGL), and 238–258 (ELGIAFIQAQVFVVLTSGYIK).

The protein belongs to the ATPase A chain family. F-type ATPases have 2 components, CF(1) - the catalytic core - and CF(0) - the membrane proton channel. CF(1) has five subunits: alpha(3), beta(3), gamma(1), delta(1), epsilon(1). CF(0) has three main subunits: a, b and c.

It localises to the mitochondrion inner membrane. Its function is as follows. Mitochondrial membrane ATP synthase (F(1)F(0) ATP synthase or Complex V) produces ATP from ADP in the presence of a proton gradient across the membrane which is generated by electron transport complexes of the respiratory chain. F-type ATPases consist of two structural domains, F(1) - containing the extramembraneous catalytic core and F(0) - containing the membrane proton channel, linked together by a central stalk and a peripheral stalk. During catalysis, ATP synthesis in the catalytic domain of F(1) is coupled via a rotary mechanism of the central stalk subunits to proton translocation. Key component of the proton channel; it may play a direct role in the translocation of protons across the membrane. This chain is ATP synthase subunit a (ATP6), found in Podospora anserina (strain S / ATCC MYA-4624 / DSM 980 / FGSC 10383) (Pleurage anserina).